A 764-amino-acid polypeptide reads, in one-letter code: Plasma membrane fusion protein prm-1 (764 aa).

At 1 to 61 the chain is on the extracellular side; sequence MVYNEKNGGG…YLGLRARLSQ (61 aa). The chain crosses the membrane as a helical span at residues 62-82; the sequence is LWFNRWTILLILVLIRVIILT. Topologically, residues 83 to 149 are cytoplasmic; that stretch reads ANLKENLGDA…LKMILTGVQA (67 aa). The chain crosses the membrane as a helical span at residues 150-170; that stretch reads IIMFVINMYIGTFACLVAAFI. Over 171-334 the chain is Extracellular; that stretch reads HGGLHVATAV…SLITLVYKAK (164 aa). N-linked (GlcNAc...) asparagine glycans are attached at residues N271 and N315. The helical transmembrane segment at 335–355 threads the bilayer; the sequence is IAFLVVIIILALLAIFVMGYI. At 356–424 the chain is on the cytoplasmic side; sequence EYRGFKRERE…AFAYATSLPA (69 aa). The helical transmembrane segment at 425-445 threads the bilayer; the sequence is LFVLSLAVAGMLSCLFQWVLL. The Extracellular portion of the chain corresponds to 446-624; sequence RQIEKKAPEL…NGVIQEALIT (179 aa). Residues N479, N508, and N527 are each glycosylated (N-linked (GlcNAc...) asparagine). The chain crosses the membrane as a helical span at residues 625–645; it reads LGLFLTYVIVVLIGVMGALIG. The Cytoplasmic segment spans residues 646–764; the sequence is WATPGKTRGE…EKVPGYFTPI (119 aa). Disordered stretches follow at residues 653–701 and 735–754; these read RGEG…GGGG and HQRTSSYPTVESPDPMPHGD.

This sequence belongs to the PRM1 family.

The protein resides in the cell membrane. Its function is as follows. Involved in cell fusion during mating by stabilizing the plasma membrane fusion event. This is Plasma membrane fusion protein prm-1 (prm-1) from Neurospora crassa (strain ATCC 24698 / 74-OR23-1A / CBS 708.71 / DSM 1257 / FGSC 987).